A 90-amino-acid chain; its full sequence is U7-theraphotoxin-Hhn1e (90 aa).

An N-terminal signal peptide occupies residues 1–19 (MKTAIFTVVLALAVFAVLS). Positions 20–50 (FGWEANEKALSEEFTELIHEKEAASETEARE) are excised as a propeptide. 3 disulfide bridges follow: C51–C65, C58–C70, and C64–C81.

The protein belongs to the neurotoxin 10 (Hwtx-1) family. 13 (Hntx-13) subfamily. Expressed by the venom gland.

It localises to the secreted. Ion channel inhibitor. The sequence is that of U7-theraphotoxin-Hhn1e from Cyriopagopus hainanus (Chinese bird spider).